We begin with the raw amino-acid sequence, 833 residues long: Patatin-like phospholipase domain-containing protein SNOG_00918 (833 aa).

Disordered regions lie at residues 1-20 (MTDV…SAFD) and 49-71 (HLSP…SANN). A helical membrane pass occupies residues 108–128 (WPLLVVVLGWLLFLSIAYVFT). A PNPLA domain is found at 301–457 (LCLSGGATFA…RTDIPLKALN (157 aa)). A GXSXG motif is present at residues 332–336 (GTSGG). The active-site Nucleophile is S334. Catalysis depends on D444, which acts as the Proton acceptor. Disordered regions lie at residues 630–657 (TKSK…FSRP) and 680–833 (LRTD…GKGL). The span at 644–655 (SGSESSSSADFS) shows a compositional bias: low complexity. The span at 689-707 (DTPNSPSLSARLTGWWNTK) shows a compositional bias: polar residues. Basic and acidic residues-rich tracts occupy residues 740–750 (RPPKEVRDLQA), 759–769 (RNSDFLEEIRR), and 782–794 (DEGR…RGDV). Over residues 809–819 (EFGDNEGDGEE) the composition is skewed to acidic residues.

The protein belongs to the PLPL family.

The protein resides in the membrane. Functionally, probable lipid hydrolase. The polypeptide is Patatin-like phospholipase domain-containing protein SNOG_00918 (Phaeosphaeria nodorum (strain SN15 / ATCC MYA-4574 / FGSC 10173) (Glume blotch fungus)).